Consider the following 551-residue polypeptide: MTKKMLDNLYKFSLEGKMTDIILEIEDDNSIITMNLHKNILAASCSYFDRLFNGNFLDSNTQKVKINVSNSLITKNIIKSFYGQENDVIDIPDWQYILEEIICKDYLGLDYDTSTLKDINVPSEYYDLLVYVAGIVGFNNPNITNLLTDLMPIDYDLTNISKDDIEFLLNRTGDCIFSLQGYESRYKTHRKYRLKILDSMTGNIIKTTNKYITKKFVYDFMNNEVICIDFDKNTSLIKCLKLSTNSEYEIKRSHNVENIILSNDGKILISYHIDKSETKFNSRRRSKEIAKSCLFKFFDVSDKKILFSFYIKEVVEKNTHIFNNHSDSEDDSPYCDELSKFYFEIKFMDISPDDKYLVCCFSTKFCLCLNIETKEVLWTTNLCNINNDNYYFNNSILSSSLYIVSLKDMIYVLDVSNGNTLKKIKKYNEGVYSFDDNVMMIYHSSKIEIYDWKNDKTIRTIKSTEKLLKHVYNPRTMTLYSSNNYDNIVSYKFNNFDIDTFTNRIISDDCDEFVFVNNYNKKIQDKLSDYLKTQNKTSEYDCVGSHINEID.

Positions 19–90 (TDIILEIEDD…FYGQENDVID (72 aa)) constitute a BTB domain.

It belongs to the mimivirus BTB/WD family.

The chain is Putative BTB/POZ domain-containing protein L76 from Acanthamoeba polyphaga (Amoeba).